The chain runs to 232 residues: Large ribosomal subunit protein uL1 (232 aa).

This sequence belongs to the universal ribosomal protein uL1 family. Part of the 50S ribosomal subunit.

Binds directly to 23S rRNA. The L1 stalk is quite mobile in the ribosome, and is involved in E site tRNA release. Its function is as follows. Protein L1 is also a translational repressor protein, it controls the translation of the L11 operon by binding to its mRNA. This Marinobacter nauticus (strain ATCC 700491 / DSM 11845 / VT8) (Marinobacter aquaeolei) protein is Large ribosomal subunit protein uL1.